Consider the following 126-residue polypeptide: Ribonuclease VapC23 (126 aa).

Residues 2 to 118 (IFVDTNVFMY…GVTRIKTFDH (117 aa)) enclose the PINc domain. Mg(2+) is bound by residues Asp5 and Asp98.

This sequence belongs to the PINc/VapC protein family. It depends on Mg(2+) as a cofactor.

Its function is as follows. Toxic component of a type II toxin-antitoxin (TA) system. An RNase. The cognate antitoxin is VapB23. In Mycobacterium tuberculosis (strain CDC 1551 / Oshkosh), this protein is Ribonuclease VapC23.